A 306-amino-acid polypeptide reads, in one-letter code: Tyrosine recombinase XerC (306 aa).

One can recognise a Core-binding (CB) domain in the interval 10–94 (ARCHSYLQQF…AVKQWGEFLL (85 aa)). One can recognise a Tyr recombinase domain in the interval 115 to 294 (PLPKNIDVDS…DFQHLAKVYD (180 aa)). Catalysis depends on residues arginine 154, lysine 178, histidine 246, arginine 249, and histidine 272. Tyrosine 281 functions as the O-(3'-phospho-DNA)-tyrosine intermediate in the catalytic mechanism.

The protein belongs to the 'phage' integrase family. XerC subfamily. Forms a cyclic heterotetrameric complex composed of two molecules of XerC and two molecules of XerD.

It is found in the cytoplasm. In terms of biological role, site-specific tyrosine recombinase, which acts by catalyzing the cutting and rejoining of the recombining DNA molecules. The XerC-XerD complex is essential to convert dimers of the bacterial chromosome into monomers to permit their segregation at cell division. It also contributes to the segregational stability of plasmids. This is Tyrosine recombinase XerC from Shewanella oneidensis (strain ATCC 700550 / JCM 31522 / CIP 106686 / LMG 19005 / NCIMB 14063 / MR-1).